The following is a 294-amino-acid chain: 4-hydroxy-tetrahydrodipicolinate synthase (294 aa).

Thr47 provides a ligand contact to pyruvate. Tyr136 functions as the Proton donor/acceptor in the catalytic mechanism. Lys164 (schiff-base intermediate with substrate) is an active-site residue. A pyruvate-binding site is contributed by Val206.

It belongs to the DapA family. In terms of assembly, homotetramer; dimer of dimers.

It is found in the cytoplasm. The catalysed reaction is L-aspartate 4-semialdehyde + pyruvate = (2S,4S)-4-hydroxy-2,3,4,5-tetrahydrodipicolinate + H2O + H(+). It functions in the pathway amino-acid biosynthesis; L-lysine biosynthesis via DAP pathway; (S)-tetrahydrodipicolinate from L-aspartate: step 3/4. Catalyzes the condensation of (S)-aspartate-beta-semialdehyde [(S)-ASA] and pyruvate to 4-hydroxy-tetrahydrodipicolinate (HTPA). This is 4-hydroxy-tetrahydrodipicolinate synthase from Nostoc punctiforme (strain ATCC 29133 / PCC 73102).